The sequence spans 314 residues: Olfactory receptor 9Q2 (314 aa).

Topologically, residues 1–25 (MAERNYTVVTEFFLTAFTEHLQWRV) are extracellular. The N-linked (GlcNAc...) asparagine glycan is linked to N5. Residues 26 to 46 (PLFLIFLSFYLATMLGNTGMI) form a helical membrane-spanning segment. The Cytoplasmic segment spans residues 47–54 (LLIRGDRR). A helical membrane pass occupies residues 55–75 (LHTPMYFFLSHLSLVDICYSS). Residues 76–99 (AIIPQMLAVLWEHGTTISQARCAA) lie on the Extracellular side of the membrane. C97 and C189 are oxidised to a cystine. The chain crosses the membrane as a helical span at residues 100–120 (QFFLFTFFASIDCYLLAIMAY). Topologically, residues 121-139 (DRYTAVCQPLLYVTIITEK) are cytoplasmic. Residues 140 to 160 (ARWGLVTGAYVAGFFSAFVRT) traverse the membrane as a helical segment. Over 161-197 (VTAFTLSFCGNNEINFIFCDLPPLLKLSCGDSYTQEV) the chain is Extracellular. The helical transmembrane segment at 198 to 217 (VIIVFALFVMPACILVILVS) threads the bilayer. Residues 218-237 (YLFIIVAILQIHSAGGRAKT) lie on the Cytoplasmic side of the membrane. A helical membrane pass occupies residues 238 to 258 (FSTCASHLTAVALFFGTLIFM). Residues 259-271 (YLRDNTGQSSEGD) are Extracellular-facing. Residues 272–292 (RVVSVLYTVVTPMLNPLIYSL) form a helical membrane-spanning segment. Over 293–314 (RNKEVKEATRKALSKSKPARRP) the chain is Cytoplasmic.

This sequence belongs to the G-protein coupled receptor 1 family.

Its subcellular location is the cell membrane. Functionally, odorant receptor. The chain is Olfactory receptor 9Q2 (OR9Q2) from Homo sapiens (Human).